The sequence spans 364 residues: MQKNNRVVVGMSGGVDSSVAAYLLKEQGYEVIGVTMQIWQDKDEEAVRVEGGCCSLAAVNDARRVANKIGIKYYVMNFKDVFKEKVIDYFVDEYLRGRTPNPCIACNKYIKFEELLKRAWMIDAYYVATGHYAIKEYDEERGRYLLKKSVDTSKDQTYVLYNLTQTQLEHILFPLGKYKKDKVRELAKNLGLPVASKPDSQEICFVTDNDYGKFIRENAKEEIKPGEFRDTRGRFLGYHKGIIHYTIGQRKGLGISVGKPLYVVDIDAENNVVVLGYGDEVYGDELISYNNNFISIDKLEKEMRVKAKIRYTAKEQDAVIRPLEDGRVFVKFDNPQRAITPGQSVVFYDGDIVVGGGIIERKVR.

ATP is bound by residues 10–17 (GMSGGVDS) and methionine 36. The active-site Nucleophile is the cysteine 106. Cysteine 106 and cysteine 204 form a disulfide bridge. Glycine 130 serves as a coordination point for ATP. The tract at residues 154-156 (KDQ) is interaction with tRNA. Cysteine 204 functions as the Cysteine persulfide intermediate in the catalytic mechanism. An interaction with tRNA region spans residues 310–311 (RY).

Belongs to the MnmA/TRMU family.

The protein resides in the cytoplasm. It catalyses the reaction S-sulfanyl-L-cysteinyl-[protein] + uridine(34) in tRNA + AH2 + ATP = 2-thiouridine(34) in tRNA + L-cysteinyl-[protein] + A + AMP + diphosphate + H(+). Catalyzes the 2-thiolation of uridine at the wobble position (U34) of tRNA, leading to the formation of s(2)U34. This Caldanaerobacter subterraneus subsp. tengcongensis (strain DSM 15242 / JCM 11007 / NBRC 100824 / MB4) (Thermoanaerobacter tengcongensis) protein is tRNA-specific 2-thiouridylase MnmA 2.